Reading from the N-terminus, the 414-residue chain is Cytochrome c biogenesis protein Ccs1 (414 aa).

A run of 3 helical transmembrane segments spans residues 14-34 (LTVAIIILLAIALASALGTVI), 73-93 (SWWFIFLIILLLLSLTLCTIT), and 159-179 (VSPIIVHFSLVIVLIGSMLST).

The protein belongs to the Ccs1/CcsB family. As to quaternary structure, may interact with CcsA.

It localises to the plastid. Its subcellular location is the chloroplast thylakoid membrane. Functionally, required during biogenesis of c-type cytochromes (cytochrome c6 and cytochrome f) at the step of heme attachment. In Guillardia theta (Cryptophyte), this protein is Cytochrome c biogenesis protein Ccs1.